The primary structure comprises 504 residues: Maturase K (504 aa).

The protein belongs to the intron maturase 2 family. MatK subfamily.

It is found in the plastid. It localises to the chloroplast. In terms of biological role, usually encoded in the trnK tRNA gene intron. Probably assists in splicing its own and other chloroplast group II introns. The protein is Maturase K of Aruncus dioicus (Goat's beard).